The primary structure comprises 499 residues: Lanosterol 14-alpha demethylase (499 aa).

Residues 13–35 traverse the membrane as a helical segment; sequence SAVLQMSLTSVLLTASVFTLTLG. Cys441 serves as a coordination point for heme.

This sequence belongs to the cytochrome P450 family. It depends on heme as a cofactor. In terms of tissue distribution, strongly expressed in intestine. Moderately expressed in liver, with higher levels in females compared to males. Also detected at low levels in brain, eye, kidney and testis.

It is found in the endoplasmic reticulum membrane. It localises to the membrane. It carries out the reaction a 14alpha-methyl steroid + 3 reduced [NADPH--hemoprotein reductase] + 3 O2 = a Delta(14) steroid + formate + 3 oxidized [NADPH--hemoprotein reductase] + 4 H2O + 4 H(+). The enzyme catalyses lanosterol + 3 reduced [NADPH--hemoprotein reductase] + 3 O2 = 4,4-dimethyl-5alpha-cholesta-8,14,24-trien-3beta-ol + formate + 3 oxidized [NADPH--hemoprotein reductase] + 4 H2O + 4 H(+). It catalyses the reaction 24,25-dihydrolanosterol + 3 reduced [NADPH--hemoprotein reductase] + 3 O2 = 4,4-dimethyl-8,14-cholestadien-3beta-ol + formate + 3 oxidized [NADPH--hemoprotein reductase] + 4 H2O + 4 H(+). The catalysed reaction is a 14alpha-methyl steroid + reduced [NADPH--hemoprotein reductase] + O2 = a 14alpha-hydroxymethyl steroid + oxidized [NADPH--hemoprotein reductase] + H2O + H(+). It carries out the reaction a 14alpha-hydroxymethyl steroid + reduced [NADPH--hemoprotein reductase] + O2 = a 14alpha-formyl steroid + oxidized [NADPH--hemoprotein reductase] + 2 H2O + H(+). The enzyme catalyses a 14alpha-formyl steroid + reduced [NADPH--hemoprotein reductase] + O2 = a Delta(14) steroid + formate + oxidized [NADPH--hemoprotein reductase] + H2O + 2 H(+). It catalyses the reaction lanosterol + reduced [NADPH--hemoprotein reductase] + O2 = 32-hydroxylanosterol + oxidized [NADPH--hemoprotein reductase] + H2O + H(+). The catalysed reaction is 32-hydroxylanosterol + reduced [NADPH--hemoprotein reductase] + O2 = 32-oxolanosterol + oxidized [NADPH--hemoprotein reductase] + 2 H2O + H(+). It carries out the reaction 32-oxolanosterol + reduced [NADPH--hemoprotein reductase] + O2 = 4,4-dimethyl-5alpha-cholesta-8,14,24-trien-3beta-ol + formate + oxidized [NADPH--hemoprotein reductase] + H2O + 2 H(+). The enzyme catalyses 24,25-dihydrolanosterol + reduced [NADPH--hemoprotein reductase] + O2 = 32-hydroxy-24,25-dihydrolanosterol + oxidized [NADPH--hemoprotein reductase] + H2O + H(+). It catalyses the reaction 32-hydroxy-24,25-dihydrolanosterol + reduced [NADPH--hemoprotein reductase] + O2 = 32-oxo-24,25-dihydrolanosterol + oxidized [NADPH--hemoprotein reductase] + 2 H2O + H(+). The catalysed reaction is 32-oxo-24,25-dihydrolanosterol + reduced [NADPH--hemoprotein reductase] + O2 = 4,4-dimethyl-8,14-cholestadien-3beta-ol + formate + oxidized [NADPH--hemoprotein reductase] + H2O + 2 H(+). The protein operates within steroid biosynthesis; zymosterol biosynthesis; zymosterol from lanosterol: step 1/6. Inhibited by ketoconazole. May also be inhibited to a lesser extent by propiconazole. Sterol 14alpha-demethylase that plays a critical role in the cholesterol biosynthesis pathway, being cholesterol the major sterol component in deuterostome membranes as well as a precursor for steroid hormone synthesis. Cytochrome P450 monooxygenase that catalyzes the three-step oxidative removal of the 14alpha-methyl group (C-32) of sterols such as lanosterol (lanosta-8,24-dien-3beta-ol) and 24,25-dihydrolanosterol (DHL) in the form of formate, and converts the sterols to 4,4-dimethyl-5alpha-cholesta-8,14,24-trien-3beta-ol and 4,4-dimethyl-8,14-cholestadien-3beta-ol, respectively, which are intermediates of cholesterol biosynthesis. Can also demethylate substrates not intrinsic to deuterostomes, such as eburicol (24-methylene-24,25-dihydrolanosterol), but at a lower rate than DHL. The protein is Lanosterol 14-alpha demethylase of Danio rerio (Zebrafish).